An 891-amino-acid polypeptide reads, in one-letter code: Aconitate hydratase A (891 aa).

Residues cysteine 435, cysteine 501, and cysteine 504 each contribute to the [4Fe-4S] cluster site.

This sequence belongs to the aconitase/IPM isomerase family. In terms of assembly, monomer. [4Fe-4S] cluster serves as cofactor.

It carries out the reaction citrate = D-threo-isocitrate. The catalysed reaction is (2S,3R)-3-hydroxybutane-1,2,3-tricarboxylate = 2-methyl-cis-aconitate + H2O. It participates in carbohydrate metabolism; tricarboxylic acid cycle; isocitrate from oxaloacetate: step 2/2. Its pathway is organic acid metabolism; propanoate degradation. Its function is as follows. Involved in the catabolism of short chain fatty acids (SCFA) via the tricarboxylic acid (TCA)(acetyl degradation route) and probably the 2-methylcitrate cycle I (propionate degradation route). Catalyzes the reversible isomerization of citrate to isocitrate via cis-aconitate. The apo form of AcnA functions as a RNA-binding regulatory protein. Could catalyze the hydration of 2-methyl-cis-aconitate to yield (2R,3S)-2-methylisocitrate. The chain is Aconitate hydratase A (acn) from Legionella pneumophila subsp. pneumophila (strain Philadelphia 1 / ATCC 33152 / DSM 7513).